Reading from the N-terminus, the 446-residue chain is Histidine--tRNA ligase (446 aa).

This sequence belongs to the class-II aminoacyl-tRNA synthetase family. As to quaternary structure, homodimer.

Its subcellular location is the cytoplasm. It catalyses the reaction tRNA(His) + L-histidine + ATP = L-histidyl-tRNA(His) + AMP + diphosphate + H(+). In Burkholderia pseudomallei (strain K96243), this protein is Histidine--tRNA ligase.